Here is a 288-residue protein sequence, read N- to C-terminus: Probable ketoamine kinase SAOUHSC_02908 (288 aa).

86 to 88 (TYL) lines the ATP pocket. Aspartate 191 acts as the Proton acceptor in catalysis.

This sequence belongs to the fructosamine kinase family.

The catalysed reaction is N(6)-(D-ribulosyl)-L-lysine + ATP = N(6)-(3-O-phospho-D-ribulosyl)-L-lysine + ADP + H(+). It catalyses the reaction N(6)-(D-erythrulosyl)-L-lysine + ATP = N(6)-(3-O-phospho-D-erythrulosyl)-L-lysine + ADP + H(+). It carries out the reaction N(6)-D-ribulosyl-L-lysyl-[protein] + ATP = N(6)-(3-O-phospho-D-ribulosyl)-L-lysyl-[protein] + ADP + H(+). The enzyme catalyses N(6)-(D-erythrulosyl)-L-lysyl-[protein] + ATP = N(6)-(3-O-phospho-D-erythrulosyl)-L-lysyl-[protein] + ADP + H(+). In terms of biological role, ketoamine kinase that phosphorylates ketoamines, such as erythruloselysine and ribuloselysine, on the third carbon of the sugar moiety to generate ketoamine 3-phosphate. Has higher activity on free lysine (erythruloselysine and ribuloselysine), than on ribuloselysine and erythruloselysine residues on glycated proteins. This Staphylococcus aureus (strain NCTC 8325 / PS 47) protein is Probable ketoamine kinase SAOUHSC_02908.